The sequence spans 218 residues: Guanylate kinase (218 aa).

The Guanylate kinase-like domain maps to 14–193; sequence GLMLVLSSPS…AFAEVRGIVV (180 aa). 21–28 is an ATP binding site; it reads SPSGAGKS.

The protein belongs to the guanylate kinase family.

It localises to the cytoplasm. It carries out the reaction GMP + ATP = GDP + ADP. In terms of biological role, essential for recycling GMP and indirectly, cGMP. The protein is Guanylate kinase (gmk) of Mesorhizobium japonicum (strain LMG 29417 / CECT 9101 / MAFF 303099) (Mesorhizobium loti (strain MAFF 303099)).